Here is a 613-residue protein sequence, read N- to C-terminus: Vitamin B12 transporter BtuB (613 aa).

The N-terminal stretch at 1-22 is a signal peptide; that stretch reads MQKSLLAIAMASLLTPISYLHA. The short motif at 29 to 36 is the TonB box element; it reads DTVVVTAN. A TBDR plug domain is found at 41–154; the sequence is VESSVLASIS…IGGVIHIKTI (114 aa). Positions 159–613 constitute a TBDR beta-barrel domain; that stretch reads QTKHDANLGY…NWFATVNYRF (455 aa). The TonB C-terminal box signature appears at 591–613; sequence HSSGGKYYVGEGRNWFATVNYRF.

The protein belongs to the TonB-dependent receptor family. BtuB (TC 1.B.14.3.1) subfamily.

Its subcellular location is the cell outer membrane. In terms of biological role, involved in the active translocation of vitamin B12 (cyanocobalamin) across the outer membrane to the periplasmic space. It derives its energy for transport by interacting with the trans-periplasmic membrane protein TonB. This is Vitamin B12 transporter BtuB from Vibrio vulnificus (strain YJ016).